Here is a 76-residue protein sequence, read N- to C-terminus: uncharacterized protein (76 aa).

This is an uncharacterized protein from African swine fever virus (isolate Tick/Malawi/Lil 20-1/1983) (ASFV).